A 231-amino-acid polypeptide reads, in one-letter code: Endo-1,4-beta-xylanase 4 (231 aa).

A signal peptide spans 1–18; the sequence is MVSFTTILVAATAALVAA. Residues 42 to 230 enclose the GH11 domain; that stretch reads GGTPSSTGTH…SSGSSTVTIQ (189 aa). An N-linked (GlcNAc...) asparagine glycan is attached at Asn-99. Glu-126 functions as the Nucleophile in the catalytic mechanism. Glu-217 functions as the Proton donor in the catalytic mechanism.

This sequence belongs to the glycosyl hydrolase 11 (cellulase G) family.

Its subcellular location is the secreted. The catalysed reaction is Endohydrolysis of (1-&gt;4)-beta-D-xylosidic linkages in xylans.. It functions in the pathway glycan degradation; xylan degradation. Functionally, endo-1,4-beta-xylanase involved in the hydrolysis of xylan, a major structural heterogeneous polysaccharide found in plant biomass representing the second most abundant polysaccharide in the biosphere, after cellulose. The polypeptide is Endo-1,4-beta-xylanase 4 (XYL4) (Pyricularia grisea (Crabgrass-specific blast fungus)).